A 500-amino-acid chain; its full sequence is NAD(P)H-quinone oxidoreductase chain 4, chloroplastic (500 aa).

The next 14 helical transmembrane spans lie at 4 to 24 (FPWL…IFFL), 37 to 57 (ICIC…HFQL), 87 to 107 (IGPI…AWPI), 113 to 130 (LFHF…GSFS), 134 to 154 (LLLF…LLAM), 167 to 187 (FILY…GVAL), 208 to 228 (VLEI…LPII), 242 to 262 (HYST…YGLI), 272 to 292 (AHSI…IYAA), 305 to 325 (IAYS…SLTD), 330 to 350 (GALL…FLAG), 386 to 406 (LALP…GIIT), 411 to 431 (VLIP…LTPI), and 462 to 482 (LFLS…PDFV).

Belongs to the complex I subunit 4 family.

It is found in the plastid. Its subcellular location is the chloroplast thylakoid membrane. The enzyme catalyses a plastoquinone + NADH + (n+1) H(+)(in) = a plastoquinol + NAD(+) + n H(+)(out). It carries out the reaction a plastoquinone + NADPH + (n+1) H(+)(in) = a plastoquinol + NADP(+) + n H(+)(out). The polypeptide is NAD(P)H-quinone oxidoreductase chain 4, chloroplastic (Atropa belladonna (Belladonna)).